Here is a 419-residue protein sequence, read N- to C-terminus: Transcription regulator lscL (419 aa).

The zn(2)-C6 fungal-type DNA-binding region spans 12-35 (RIRKVKCDEKKPCCQKCIDTGRTC).

The protein resides in the nucleus. Functionally, transcription factor that may coregulate the expression of the gene cluster that mediates the biosynthesis of the lipopeptide antibiotics leucinostatins that show extensive biological activities, including antimalarial, antiviral, antibacterial, antifungal, and antitumor activities, as well as phytotoxic. The polypeptide is Transcription regulator lscL (Purpureocillium lilacinum (Paecilomyces lilacinus)).